The sequence spans 253 residues: 5'/3'-nucleotidase SurE (253 aa).

Positions 8, 9, 39, and 92 each coordinate a divalent metal cation.

Belongs to the SurE nucleotidase family. A divalent metal cation is required as a cofactor.

The protein localises to the cytoplasm. The catalysed reaction is a ribonucleoside 5'-phosphate + H2O = a ribonucleoside + phosphate. It catalyses the reaction a ribonucleoside 3'-phosphate + H2O = a ribonucleoside + phosphate. The enzyme catalyses [phosphate](n) + H2O = [phosphate](n-1) + phosphate + H(+). Nucleotidase with a broad substrate specificity as it can dephosphorylate various ribo- and deoxyribonucleoside 5'-monophosphates and ribonucleoside 3'-monophosphates with highest affinity to 3'-AMP. Also hydrolyzes polyphosphate (exopolyphosphatase activity) with the preference for short-chain-length substrates (P20-25). Might be involved in the regulation of dNTP and NTP pools, and in the turnover of 3'-mononucleotides produced by numerous intracellular RNases (T1, T2, and F) during the degradation of various RNAs. The sequence is that of 5'/3'-nucleotidase SurE from Escherichia coli O7:K1 (strain IAI39 / ExPEC).